A 177-amino-acid chain; its full sequence is Putative HTH-type transcriptional regulator YvaV (177 aa).

Positions 49-73 (LTELSEATGMSKTRMSQVVREMLDA) form a DNA-binding region, H-T-H motif.

It belongs to the GbsR family.

In Bacillus subtilis (strain 168), this protein is Putative HTH-type transcriptional regulator YvaV (yvaV).